Consider the following 359-residue polypeptide: MEKIFQNVEIKPFLIDFSNPFIKNAAKRLFQLEEQLPLVPVNVVMDFKGISRAAVHGLSRVLQDEIPNYMLDIKPGGYKIEDSTDLFMTEQFIRNRINFIPIYAKNETLVFALRSLNNSCEVKTIYSRDLIQVAGPKLKYPIFNPTFEIGFLQPGKSLIIEDIYIKKGIGRKHAAFNLAVKTHFSHLDIEQYPTDKKEYMALSGYKQSSMTSDPRHHRLGLCFPAVPLPHINQAVRTYLKNACRIIIGRIQSIQKIYENFEEPQPELVLFSLDEEKTKAIITIKDETHTIGNLLKTCIYEMIPDISFVGYQCVPHKQEMVLTIIHKASQEDLITLLEKSIQNIIQTFQILEKNVDELIA.

This sequence in the N-terminal section; belongs to the archaeal RpoD/eukaryotic RPB3 RNA polymerase subunit family. It in the C-terminal section; belongs to the archaeal RpoL/eukaryotic RPB11/RPC19 RNA polymerase subunit family. As to quaternary structure, part of the viral DNA-directed RNA polymerase that consists of 8 polII-like subunits (RPB1, RPB2, RPB3, RPB5, RPB6, RPB7, RPB9, RPB10), a capping enzyme and a termination factor.

The protein resides in the host cytoplasm. The protein localises to the virion. Functionally, component of the DNA-directed RNA polymerase (RNAP) that catalyzes the transcription in the cytoplasm of viral DNA into RNA using the four ribonucleoside triphosphates as substrates. This Ornithodoros (relapsing fever ticks) protein is DNA-directed RNA polymerase RPB3-11 homolog.